Here is a 231-residue protein sequence, read N- to C-terminus: MIP18 family protein YHR122W (231 aa).

2 disordered regions span residues 1–26 (MSEFLNENPDILEENQLPTRKEDSTK) and 75–100 (LTSDEDSLPAESEDESVAGGGKEEEE). An N-acetylserine modification is found at Ser2. Acidic residues predominate over residues 76 to 90 (TSDEDSLPAESEDES).

Belongs to the MIP18 family.

Functionally, may play a role in chromosome segregation through establishment of sister chromatid cohesion. This is MIP18 family protein YHR122W from Saccharomyces cerevisiae (strain ATCC 204508 / S288c) (Baker's yeast).